The sequence spans 149 residues: Ribonuclease VapC2 (149 aa).

Residues isoleucine 11–isoleucine 149 enclose the PINc domain. Positions 14 and 116 each coordinate Mg(2+).

It belongs to the PINc/VapC protein family. Requires Mg(2+) as cofactor.

In terms of biological role, toxic component of a type II toxin-antitoxin (TA) system. An RNase. Its cognate antitoxin is VapB2. In Methanocaldococcus jannaschii (strain ATCC 43067 / DSM 2661 / JAL-1 / JCM 10045 / NBRC 100440) (Methanococcus jannaschii), this protein is Ribonuclease VapC2.